Consider the following 449-residue polypeptide: UDP-N-acetylmuramoylalanine--D-glutamate ligase (449 aa).

Position 118–124 (118–124 (GTNGKTT)) interacts with ATP.

This sequence belongs to the MurCDEF family.

The protein localises to the cytoplasm. The catalysed reaction is UDP-N-acetyl-alpha-D-muramoyl-L-alanine + D-glutamate + ATP = UDP-N-acetyl-alpha-D-muramoyl-L-alanyl-D-glutamate + ADP + phosphate + H(+). It participates in cell wall biogenesis; peptidoglycan biosynthesis. Functionally, cell wall formation. Catalyzes the addition of glutamate to the nucleotide precursor UDP-N-acetylmuramoyl-L-alanine (UMA). The protein is UDP-N-acetylmuramoylalanine--D-glutamate ligase of Staphylococcus saprophyticus subsp. saprophyticus (strain ATCC 15305 / DSM 20229 / NCIMB 8711 / NCTC 7292 / S-41).